Here is an 86-residue protein sequence, read N- to C-terminus: Toxin CSTX-20 (86 aa).

As to expression, expressed by the venom gland.

It is found in the secreted. The sequence is that of Toxin CSTX-20 from Cupiennius salei (American wandering spider).